A 187-amino-acid polypeptide reads, in one-letter code: Pyridoxal 5'-phosphate synthase subunit PdxT (187 aa).

L-glutamine is bound at residue 47-49 (GES). Cys-76 acts as the Nucleophile in catalysis. Residues Arg-102 and 128 to 129 (IR) each bind L-glutamine. Active-site charge relay system residues include His-165 and Glu-167.

It belongs to the glutaminase PdxT/SNO family. As to quaternary structure, in the presence of PdxS, forms a dodecamer of heterodimers. Only shows activity in the heterodimer.

The enzyme catalyses aldehydo-D-ribose 5-phosphate + D-glyceraldehyde 3-phosphate + L-glutamine = pyridoxal 5'-phosphate + L-glutamate + phosphate + 3 H2O + H(+). The catalysed reaction is L-glutamine + H2O = L-glutamate + NH4(+). It functions in the pathway cofactor biosynthesis; pyridoxal 5'-phosphate biosynthesis. Its function is as follows. Catalyzes the hydrolysis of glutamine to glutamate and ammonia as part of the biosynthesis of pyridoxal 5'-phosphate. The resulting ammonia molecule is channeled to the active site of PdxS. This is Pyridoxal 5'-phosphate synthase subunit PdxT from Methanococcus vannielii (strain ATCC 35089 / DSM 1224 / JCM 13029 / OCM 148 / SB).